A 223-amino-acid polypeptide reads, in one-letter code: Thiamine-phosphate synthase (223 aa).

4-amino-2-methyl-5-(diphosphooxymethyl)pyrimidine-binding positions include 37–41 and D72; that span reads QFREK. D73 and D92 together coordinate Mg(2+). Position 110 (S110) interacts with 4-amino-2-methyl-5-(diphosphooxymethyl)pyrimidine. 136 to 138 serves as a coordination point for 2-[(2R,5Z)-2-carboxy-4-methylthiazol-5(2H)-ylidene]ethyl phosphate; the sequence is TQS. K139 contributes to the 4-amino-2-methyl-5-(diphosphooxymethyl)pyrimidine binding site. 2-[(2R,5Z)-2-carboxy-4-methylthiazol-5(2H)-ylidene]ethyl phosphate-binding positions include G168 and 188–189; that span reads IS.

The protein belongs to the thiamine-phosphate synthase family. Mg(2+) serves as cofactor.

It carries out the reaction 2-[(2R,5Z)-2-carboxy-4-methylthiazol-5(2H)-ylidene]ethyl phosphate + 4-amino-2-methyl-5-(diphosphooxymethyl)pyrimidine + 2 H(+) = thiamine phosphate + CO2 + diphosphate. It catalyses the reaction 2-(2-carboxy-4-methylthiazol-5-yl)ethyl phosphate + 4-amino-2-methyl-5-(diphosphooxymethyl)pyrimidine + 2 H(+) = thiamine phosphate + CO2 + diphosphate. The catalysed reaction is 4-methyl-5-(2-phosphooxyethyl)-thiazole + 4-amino-2-methyl-5-(diphosphooxymethyl)pyrimidine + H(+) = thiamine phosphate + diphosphate. It participates in cofactor biosynthesis; thiamine diphosphate biosynthesis; thiamine phosphate from 4-amino-2-methyl-5-diphosphomethylpyrimidine and 4-methyl-5-(2-phosphoethyl)-thiazole: step 1/1. In terms of biological role, condenses 4-methyl-5-(beta-hydroxyethyl)thiazole monophosphate (THZ-P) and 2-methyl-4-amino-5-hydroxymethyl pyrimidine pyrophosphate (HMP-PP) to form thiamine monophosphate (TMP). The chain is Thiamine-phosphate synthase from Streptococcus agalactiae serotype III (strain NEM316).